A 366-amino-acid chain; its full sequence is Cyclic amide hydrolase (366 aa).

Positions 1-103 are RU A; the sequence is MKVGVHKLAM…TLFTRAPDDG (103 aa). Substrate is bound by residues Arg51 and 82-83; that span reads SG. The tract at residues 110–247 is RU B; it reads RLALGIGITR…CEVLLFGNAP (138 aa). Lys160 is an active-site residue. Residues Arg192, 230-231, Arg327, and 346-347 contribute to the substrate site; these read SA and SG. The active-site Nucleophile is Ser230. The RU C stretch occupies residues 253–366; it reads FRIGHGVLKD…AAPIAAIVRA (114 aa).

Belongs to the cyclic amide hydrolase (CyAH) family. As to quaternary structure, homotetramer.

Its function is as follows. Cyclic amide hydrolase of unknown substrate specificity. Catalyzes the hydrolytic ring-opening of a cyclic amide. Does not act on cyanuric acid nor barbituric acid. The protein is Cyclic amide hydrolase of Azorhizobium caulinodans (strain ATCC 43989 / DSM 5975 / JCM 20966 / LMG 6465 / NBRC 14845 / NCIMB 13405 / ORS 571).